A 520-amino-acid polypeptide reads, in one-letter code: Transactivator/viroplasmin protein (520 aa).

The disordered stretch occupies residues 486–520 (VQDASADSGPKDGPPPTRSIVEKEDVPTTSSKQVD).

Belongs to the caulimoviridae viroplasmin family.

The protein localises to the host cytoplasm. Enhances the ribosomal termination-reinitiation event leading to the translation of major open reading frames on the polycistronic viral RNAs. The polypeptide is Transactivator/viroplasmin protein (Cauliflower mosaic virus (strain NY8153) (CaMV)).